Reading from the N-terminus, the 489-residue chain is Rhamnulokinase (489 aa).

13–17 (ASSGR) contacts ATP. An intrachain disulfide couples cysteine 68 to cysteine 222. Substrate-binding positions include glycine 83 and 236–238 (HDT). Residue aspartate 237 is the Proton acceptor of the active site. Threonine 259 contributes to the ATP binding site. Asparagine 296 is a binding site for substrate. Residue glutamine 304 participates in ATP binding. A disulfide bridge links cysteine 353 with cysteine 370. Glycine 402 contributes to the ATP binding site. A disulfide bridge links cysteine 413 with cysteine 417.

The protein belongs to the rhamnulokinase family. As to quaternary structure, monomer. It depends on Mg(2+) as a cofactor.

It catalyses the reaction L-rhamnulose + ATP = L-rhamnulose 1-phosphate + ADP + H(+). The protein operates within carbohydrate degradation; L-rhamnose degradation; glycerone phosphate from L-rhamnose: step 2/3. Its function is as follows. Involved in the catabolism of L-rhamnose (6-deoxy-L-mannose). Catalyzes the transfer of the gamma-phosphate group from ATP to the 1-hydroxyl group of L-rhamnulose to yield L-rhamnulose 1-phosphate. This chain is Rhamnulokinase, found in Escherichia coli (strain K12 / DH10B).